We begin with the raw amino-acid sequence, 465 residues long: Glutamate--tRNA ligase 2 (465 aa).

Residues 8–18 (PSPTGLMHLGN) carry the 'HIGH' region motif. The short motif at 249–253 (PLSKR) is the 'KMSKS' region element. Residue K252 participates in ATP binding.

It belongs to the class-I aminoacyl-tRNA synthetase family. Glutamate--tRNA ligase type 1 subfamily. As to quaternary structure, monomer.

The protein resides in the cytoplasm. It catalyses the reaction tRNA(Glu) + L-glutamate + ATP = L-glutamyl-tRNA(Glu) + AMP + diphosphate. Its function is as follows. Catalyzes the attachment of glutamate to tRNA(Glu) in a two-step reaction: glutamate is first activated by ATP to form Glu-AMP and then transferred to the acceptor end of tRNA(Glu). The polypeptide is Glutamate--tRNA ligase 2 (Coxiella burnetii (strain RSA 331 / Henzerling II)).